A 374-amino-acid chain; its full sequence is MATKLDYYAVLEVTRDANGDELKKAYRRLAMQYHPDRNPGDASAEARFKEINEAYDILKDEQKRAAYDRFGHAAFEGGGPGAGGFDFGGGLGDIFEQMFGDMMGGRRGGRRSGSDIQIQVSISFTEAFTGVKKPITVPTRVTCESCEGTGSADRDQGAETCPTCHGAGKVRAQQGFFLVERACPTCHGAGKVVRNPCAACHGAGTVERERTLEVAIPAGVEDGTRIRLSGEGEAGGKGAAPGDLYIHVAVEPHPIFQRDGANIYCRVPLRMSLAALGTEIEVPVVDGSRTKVKVPAGTQTGENFRLRGKGFSVLRSSARGDMYIQVSVETPRHLTKRQRELLEEFEAEAGDHERANPESTGFFSKVRDFFEGKL.

One can recognise a J domain in the interval 6 to 71; sequence DYYAVLEVTR…QKRAAYDRFG (66 aa). The segment at 130–209 adopts a CR-type zinc-finger fold; it reads GVKKPITVPT…CHGAGTVERE (80 aa). 8 residues coordinate Zn(2+): C143, C146, C161, C164, C183, C186, C197, and C200. CXXCXGXG motif repeat units lie at residues 143–150, 161–168, 183–190, and 197–204; these read CESCEGTG, CPTCHGAG, and CAACHGAG.

This sequence belongs to the DnaJ family. Homodimer. Zn(2+) is required as a cofactor.

The protein resides in the cytoplasm. Functionally, participates actively in the response to hyperosmotic and heat shock by preventing the aggregation of stress-denatured proteins and by disaggregating proteins, also in an autonomous, DnaK-independent fashion. Unfolded proteins bind initially to DnaJ; upon interaction with the DnaJ-bound protein, DnaK hydrolyzes its bound ATP, resulting in the formation of a stable complex. GrpE releases ADP from DnaK; ATP binding to DnaK triggers the release of the substrate protein, thus completing the reaction cycle. Several rounds of ATP-dependent interactions between DnaJ, DnaK and GrpE are required for fully efficient folding. Also involved, together with DnaK and GrpE, in the DNA replication of plasmids through activation of initiation proteins. In Gluconacetobacter diazotrophicus (strain ATCC 49037 / DSM 5601 / CCUG 37298 / CIP 103539 / LMG 7603 / PAl5), this protein is Chaperone protein DnaJ.